We begin with the raw amino-acid sequence, 236 residues long: Cytochrome c biogenesis ATP-binding export protein CcmA (236 aa).

Residues 14-235 (LEATGLQVAR…SAGDRVTGTE (222 aa)) form the ABC transporter domain. ATP is bound at residue 46–53 (GANGSGKT).

The protein belongs to the ABC transporter superfamily. CcmA exporter (TC 3.A.1.107) family. The complex is composed of two ATP-binding proteins (CcmA) and two transmembrane proteins (CcmB).

It localises to the cell inner membrane. It catalyses the reaction heme b(in) + ATP + H2O = heme b(out) + ADP + phosphate + H(+). Its function is as follows. Part of the ABC transporter complex CcmAB involved in the biogenesis of c-type cytochromes; once thought to export heme, this seems not to be the case, but its exact role is uncertain. Responsible for energy coupling to the transport system. The protein is Cytochrome c biogenesis ATP-binding export protein CcmA of Alkalilimnicola ehrlichii (strain ATCC BAA-1101 / DSM 17681 / MLHE-1).